The primary structure comprises 316 residues: Small ribosomal subunit biogenesis GTPase RsgA (316 aa).

The 166-residue stretch at 83–248 (DQYKSKLFAA…LIDSPGFQEF (166 aa)) folds into the CP-type G domain. GTP is bound by residues 131–134 (NKTD) and 185–193 (GQSGMGKST). Cysteine 272, cysteine 277, histidine 279, and cysteine 285 together coordinate Zn(2+).

This sequence belongs to the TRAFAC class YlqF/YawG GTPase family. RsgA subfamily. In terms of assembly, monomer. Associates with 30S ribosomal subunit, binds 16S rRNA. It depends on Zn(2+) as a cofactor.

The protein localises to the cytoplasm. Its function is as follows. One of several proteins that assist in the late maturation steps of the functional core of the 30S ribosomal subunit. Helps release RbfA from mature subunits. May play a role in the assembly of ribosomal proteins into the subunit. Circularly permuted GTPase that catalyzes slow GTP hydrolysis, GTPase activity is stimulated by the 30S ribosomal subunit. The protein is Small ribosomal subunit biogenesis GTPase RsgA of Paraburkholderia phytofirmans (strain DSM 17436 / LMG 22146 / PsJN) (Burkholderia phytofirmans).